The sequence spans 363 residues: tRNA(Met) cytidine acetate ligase (363 aa).

Residues 7–20 (IAEF…HKYL), glycine 96, asparagine 152, and arginine 175 each bind ATP.

The protein belongs to the TmcAL family.

The protein localises to the cytoplasm. It catalyses the reaction cytidine(34) in elongator tRNA(Met) + acetate + ATP = N(4)-acetylcytidine(34) in elongator tRNA(Met) + AMP + diphosphate. Its function is as follows. Catalyzes the formation of N(4)-acetylcytidine (ac(4)C) at the wobble position of elongator tRNA(Met), using acetate and ATP as substrates. First activates an acetate ion to form acetyladenylate (Ac-AMP) and then transfers the acetyl group to tRNA to form ac(4)C34. The protein is tRNA(Met) cytidine acetate ligase of Streptococcus gordonii (strain Challis / ATCC 35105 / BCRC 15272 / CH1 / DL1 / V288).